The primary structure comprises 843 residues: Protein P (843 aa).

Residues 1–177 form a terminal protein domain (TP) region; that stretch reads MPLSYQHFRK…FCGSPYSWEQ (177 aa). A spacer region spans residues 178-346; it reads ELQHGRLVFQ…YCLSHIVNLL (169 aa). 2 disordered regions span residues 218-243 and 290-316; these read LKQS…SGSI and STSK…RSQS. Residues 290 to 299 are compositionally biased toward polar residues; the sequence is STSKRQSSSG. The segment at 347–690 is polymerase/reverse transcriptase domain (RT); it reads EDWGPCTEHG…YLHLYPVARQ (344 aa). A Reverse transcriptase domain is found at 357 to 600; it reads EHNIRIPRTP…YSLNFMGYVI (244 aa). Mg(2+) is bound by residues aspartate 429, aspartate 551, and aspartate 552.

The protein belongs to the hepadnaviridae P protein family.

It carries out the reaction DNA(n) + a 2'-deoxyribonucleoside 5'-triphosphate = DNA(n+1) + diphosphate. The catalysed reaction is Endonucleolytic cleavage to 5'-phosphomonoester.. Activated by host HSP70 and HSP40 in vitro to be able to bind the epsilon loop of the pgRNA. Because deletion of the RNase H region renders the protein partly chaperone-independent, the chaperones may be needed indirectly to relieve occlusion of the RNA-binding site by this domain. Inhibited by several reverse-transcriptase inhibitors: Lamivudine, Adefovir and Entecavir. Multifunctional enzyme that converts the viral RNA genome into dsDNA in viral cytoplasmic capsids. This enzyme displays a DNA polymerase activity that can copy either DNA or RNA templates, and a ribonuclease H (RNase H) activity that cleaves the RNA strand of RNA-DNA heteroduplexes in a partially processive 3'- to 5'-endonucleasic mode. Neo-synthesized pregenomic RNA (pgRNA) are encapsidated together with the P protein, and reverse-transcribed inside the nucleocapsid. Initiation of reverse-transcription occurs first by binding the epsilon loop on the pgRNA genome, and is initiated by protein priming, thereby the 5'-end of (-)DNA is covalently linked to P protein. Partial (+)DNA is synthesized from the (-)DNA template and generates the relaxed circular DNA (RC-DNA) genome. After budding and infection, the RC-DNA migrates in the nucleus, and is converted into a plasmid-like covalently closed circular DNA (cccDNA). The activity of P protein does not seem to be necessary for cccDNA generation, and is presumably released from (+)DNA by host nuclear DNA repair machinery. The protein is Protein P of Homo sapiens (Human).